The primary structure comprises 516 residues: D-alanine--D-alanyl carrier protein ligase (516 aa).

156-157 (TS) is an ATP binding site. Residue aspartate 203 coordinates D-alanine. An ATP-binding site is contributed by 298-303 (NAYGPT). Residue valine 307 coordinates D-alanine. Residues aspartate 389, 401–404 (YGGR), and lysine 503 each bind ATP. Residue lysine 503 coordinates D-alanine.

This sequence belongs to the ATP-dependent AMP-binding enzyme family. DltA subfamily.

The protein localises to the cytoplasm. The catalysed reaction is holo-[D-alanyl-carrier protein] + D-alanine + ATP = D-alanyl-[D-alanyl-carrier protein] + AMP + diphosphate. It participates in cell wall biogenesis; lipoteichoic acid biosynthesis. Catalyzes the first step in the D-alanylation of lipoteichoic acid (LTA), the activation of D-alanine and its transfer onto the D-alanyl carrier protein (Dcp) DltC. In an ATP-dependent two-step reaction, forms a high energy D-alanyl-AMP intermediate, followed by transfer of the D-alanyl residue as a thiol ester to the phosphopantheinyl prosthetic group of the Dcp. D-alanylation of LTA plays an important role in modulating the properties of the cell wall in Gram-positive bacteria, influencing the net charge of the cell wall. The polypeptide is D-alanine--D-alanyl carrier protein ligase (Streptococcus pneumoniae (strain ATCC 700669 / Spain 23F-1)).